Reading from the N-terminus, the 151-residue chain is Transcriptional repressor NrdR (151 aa).

A zinc finger lies at 3 to 34; sequence CPHCGNCDDKVMESRTLAQGDCIRRRRECLAC. In terms of domain architecture, ATP-cone spans 49–141; sequence FMVIKKDGRR…VYKQFSNLDE (93 aa).

The protein belongs to the NrdR family. Requires Zn(2+) as cofactor.

Negatively regulates transcription of bacterial ribonucleotide reductase nrd genes and operons by binding to NrdR-boxes. This Treponema denticola (strain ATCC 35405 / DSM 14222 / CIP 103919 / JCM 8153 / KCTC 15104) protein is Transcriptional repressor NrdR.